We begin with the raw amino-acid sequence, 37 residues long: Large ribosomal subunit protein bL36 (37 aa).

It belongs to the bacterial ribosomal protein bL36 family.

The polypeptide is Large ribosomal subunit protein bL36 (Synechococcus sp. (strain CC9311)).